The sequence spans 133 residues: Small ribosomal subunit protein uS8 (133 aa).

Belongs to the universal ribosomal protein uS8 family. Part of the 30S ribosomal subunit. Contacts proteins S5 and S12.

One of the primary rRNA binding proteins, it binds directly to 16S rRNA central domain where it helps coordinate assembly of the platform of the 30S subunit. In Parasynechococcus marenigrum (strain WH8102), this protein is Small ribosomal subunit protein uS8.